The chain runs to 458 residues: Argininosuccinate lyase (458 aa).

It belongs to the lyase 1 family. Argininosuccinate lyase subfamily.

The protein localises to the cytoplasm. The enzyme catalyses 2-(N(omega)-L-arginino)succinate = fumarate + L-arginine. It participates in amino-acid biosynthesis; L-arginine biosynthesis; L-arginine from L-ornithine and carbamoyl phosphate: step 3/3. This Anoxybacillus flavithermus (strain DSM 21510 / WK1) protein is Argininosuccinate lyase.